A 288-amino-acid polypeptide reads, in one-letter code: ATP phosphoribosyltransferase (288 aa).

Belongs to the ATP phosphoribosyltransferase family. Long subfamily. Mg(2+) is required as a cofactor.

It is found in the cytoplasm. The catalysed reaction is 1-(5-phospho-beta-D-ribosyl)-ATP + diphosphate = 5-phospho-alpha-D-ribose 1-diphosphate + ATP. Its pathway is amino-acid biosynthesis; L-histidine biosynthesis; L-histidine from 5-phospho-alpha-D-ribose 1-diphosphate: step 1/9. With respect to regulation, feedback inhibited by histidine. Functionally, catalyzes the condensation of ATP and 5-phosphoribose 1-diphosphate to form N'-(5'-phosphoribosyl)-ATP (PR-ATP). Has a crucial role in the pathway because the rate of histidine biosynthesis seems to be controlled primarily by regulation of HisG enzymatic activity. The sequence is that of ATP phosphoribosyltransferase from Methanococcus maripaludis (strain C7 / ATCC BAA-1331).